The following is a 586-amino-acid chain: Phosphoenolpyruvate-protein phosphotransferase (586 aa).

H201 (tele-phosphohistidine intermediate) is an active-site residue. Phosphoenolpyruvate is bound by residues R308 and R345. Residues E446 and D470 each coordinate Mg(2+). Residues 469-470 (ND) and R480 each bind phosphoenolpyruvate. Residue C517 is the Proton donor of the active site.

This sequence belongs to the PEP-utilizing enzyme family. In terms of assembly, homodimer. The cofactor is Mg(2+).

It localises to the cytoplasm. It catalyses the reaction L-histidyl-[protein] + phosphoenolpyruvate = N(pros)-phospho-L-histidyl-[protein] + pyruvate. General (non sugar-specific) component of the phosphoenolpyruvate-dependent sugar phosphotransferase system (sugar PTS). This major carbohydrate active-transport system catalyzes the phosphorylation of incoming sugar substrates concomitantly with their translocation across the cell membrane. Enzyme I transfers the phosphoryl group from phosphoenolpyruvate (PEP) to the phosphoryl carrier protein (HPr). This is Phosphoenolpyruvate-protein phosphotransferase from Cupriavidus necator (strain ATCC 17699 / DSM 428 / KCTC 22496 / NCIMB 10442 / H16 / Stanier 337) (Ralstonia eutropha).